Here is a 347-residue protein sequence, read N- to C-terminus: Lipoyl synthase (347 aa).

The [4Fe-4S] cluster site is built by C77, C82, C88, C103, C107, C110, and S317. Residues 89–306 form the Radical SAM core domain; it reads FADGTATFMI…MDYGKKIGFF (218 aa).

This sequence belongs to the radical SAM superfamily. Lipoyl synthase family. It depends on [4Fe-4S] cluster as a cofactor.

The protein localises to the cytoplasm. It carries out the reaction [[Fe-S] cluster scaffold protein carrying a second [4Fe-4S](2+) cluster] + N(6)-octanoyl-L-lysyl-[protein] + 2 oxidized [2Fe-2S]-[ferredoxin] + 2 S-adenosyl-L-methionine + 4 H(+) = [[Fe-S] cluster scaffold protein] + N(6)-[(R)-dihydrolipoyl]-L-lysyl-[protein] + 4 Fe(3+) + 2 hydrogen sulfide + 2 5'-deoxyadenosine + 2 L-methionine + 2 reduced [2Fe-2S]-[ferredoxin]. The protein operates within protein modification; protein lipoylation via endogenous pathway; protein N(6)-(lipoyl)lysine from octanoyl-[acyl-carrier-protein]: step 2/2. In terms of biological role, catalyzes the radical-mediated insertion of two sulfur atoms into the C-6 and C-8 positions of the octanoyl moiety bound to the lipoyl domains of lipoate-dependent enzymes, thereby converting the octanoylated domains into lipoylated derivatives. This Psychrobacter cryohalolentis (strain ATCC BAA-1226 / DSM 17306 / VKM B-2378 / K5) protein is Lipoyl synthase.